Reading from the N-terminus, the 201-residue chain is uncharacterized protein (201 aa).

Disordered stretches follow at residues 46–80 and 143–201; these read PLVN…SYDE and SSTS…ANPA. Composition is skewed to polar residues over residues 64-78 and 143-167; these read GSQN…SQSY and SSTS…NSPA.

This is an uncharacterized protein from Legionella pneumophila.